The sequence spans 5161 residues: MPGSLLFDVNKLDVEKIWERNRGPLRAVNRCVHSLYEEQAIARPNACAIHAWDGNMTYEQLNQHSTRLASYLVTQGIGTEVMVPLCFEKSIWAIVAMLAVLKAGAAFVPLDPMHPRARHEEIFKQTNAKLVLTSVQHAALWPNSGLQFLAIDKTFVDQLPWETKIRSKVKPIDAVYVMFTSGSTGVPKGVVLEHRAIATSCLAHGMEMKLGSDSRALQFAAYTFDICIAEIFTTLIFGGCVCVPSEDDRRNALSEVINNNNINWAQLTPTVARLLDPSTVPSLRVLVLGGERVDEADWKRWGDDIVKVNVYGPTECSIWCTSYSNTDREFRSGTIGTSMASFSWVTDPEDHNKLVPFGTIGELLIEGPILARGYLNDISKTEAVFVDGPLWLRQGNRNDESTRRQGRLYKTGDLVYYDADGNLVYAGRKDSQTKVRGQRIELGEIEHHLNQCMSGIKQVAAEVILPSGDQAKAMVAAFVQLSEEPRHALVQQTSNGDLEVRVIFPTYLDELLVQCLPKDMVPEVYFAVAELPLTTSAKVDRQKLRKIGASFSAQQLAQLRTYSDDPKRQPETEKEQILHHLWAQVLSIDASSIGMDDSFFDLGGDSIAAMKLVGEARRSGIYITVAVVFQNPTLDKLTSAAIPSVDVSNTTIPPVGHDGHVAQSFAQGRMWFLEELHPGLTWYLMPVVVRMRGPLELTALQSALNAIESRHETLRTTFETIGDTSMQLVHPYHAKELSIIDIDIKSLEEVLHRDQISPFDLRKEAGLRVSIYRIGSEEHVLSVIMHHIISDGWSTDVFTRELGAFYSASIRGHDPLVQVQPLPIQYRDFSVWQRQQAQIDKHRSQLNYWFNVLNTSRPAELLCDKARPAALSGEASKQTIQIDGPLYIQLLQFCKAKGVTKFMVLFAAFRATHFRLTGQNDATIGTVNANRDRWELKDMIGFFVNLQCLRTTIDADESFEELVQQVYEATIASLANADVPFENIVSKLKNSRDLSRHPLVQLVFAMHSQRNLGQLKLEGLETESLDNAPKSRFDLEFHFFQQEDSLKGEVVYSTDIYSPEAIDNMLSIFQIVLEGCLQEPKAAIASLSLLCDVELSKLNSMGLIQVEKTDYPRESSVVDLFRQQTSLCPSRIAVKDASVTMTYTQLDKESDILAQWLAKQSLAPETLVSVLAGRSCQTIVAFLAILKAGLAYLPFDVRVPAKRMSTILGSLSGPKFVLLGEDVQPPYVDISDIRFIRITEALDEQTHEGSASRDIVKPTANSLAYVMFTSGSTGQPKGAMIEHRGIVRLVRDNNFVQHLPASPVMAHMTNLAFDVSTWEIYASLLQGGTLVCIDRLTVLDPEAVLRTFRQEHVSTAFMTPSLFRTYVQQLPALFAGLDMLCVGGEALHSNDILSMTTLRTGKIINGYGPTENTTFNTTFVLSREGQYPNGVPIGRALSNSGAYVMDLKQQLVPLGVVGELVVTGDGLARGYTDLERNIYRFITVQIGGEVVKAYRTGDSVRYRPADGQLEYFGRMDGQVKIRGHRIELGEIEHVLRSHGSVREAVAVVQQQQNADEAARLAAFVTVYEGDELVEEKPSGIDESEHVDVWEDQFDSKVYTPISKVLPEAIGRDFIGWTSMYDGSAIDKVEMNEWLDDTIDTMLNGHPPGKVLEVGTGTGMVLFNLGDGLESYVGLDPSSRAVEFVKDTVRSVPTLADKVRVYKATATEIDRLEPIDASLIVINSVIQYFPSLEYLFKTTQQLLGLESVSTIFFGDVRSYALHREFLATRAMFMAGDSADRAEVSRMITDMELVEKELLVDPAFFTALPERLPDQVEHVEILPKKMKATNELSCYRYAAVIHVKPRDGRKQEQRIRHVGHDEWIDFREHKLDRQSLLAQLQSNPRPSTMAVSNIPYSKTIVSRCLIESIDNAVAELSDPQDWYSSVCQRAQCSSSMSATDLYELAKEANCRVEVSWSRQHSQCGGIDAIFHRYPPRGGENRVMFQFPTDHAERPLHTLSSMPLRQQTLQRIQGQLQEMLDAQLPAYMVPQTVTFLETMPTNQNGKIDRNALTQRTEIQVAKGQEFQRELTRAESKIQQLIARVLRIDSDRIGLDDSFFQLGGDSIAAMKLVALARDEDIRLTVAKIFQYPKLIQLAAVAQEHVYVPNDNIVPFSLLDDEVDATQTHHEVAVKCAIDRGIIEDIYPCSPLQEGLMSLTVKRPGDYIMQTVLELREEVDETAFKIAWEKTVQSFQILRTRIVIHETLGLLQAVIAEKIKWADADDLATYLARDKLSSMQLGKPLARYGLVRDTRREKKWFVWTIHHAIYDGWALNHISVLCKQHTMAGKPGKQVGFNSFIKYLRQMDEDALAEYRRTTLSDCDANVFPPLVSGVQQPVADATAEYCCPPLPKRTSNTTISTLVRAAWAIVASGYTSSDDVVFGATVTGRNAPVAGIESLVGPVIATVPVRIRLQRDSTILEFLETVQKQATEMIPFEQTGLQRIAKLGPDTEHACNFQTLLIVQPAEDAFQSDDMFGTWEFGSGLQDFTTYGLMVQCKLAKEGVKITASFDARLVEQWQVERMLGQLSFVMQQLARGDSRTRVMDIGMLTQDDEQQLWMWNQRLPPAIDRCVHDLYSDQAKSRPEADAICAWDGVMTYKELDERSSRLATYLVDIGVKPETIVPLCFEKSMWMVVAMLAVLKAGGAFAPLDPSHPVSRHRDIFTQTKANMMLTSSQYANLWSEYIPTVVEITGHFIDQLTTNPYSTETAVQPGNTAYVIFTSGSTGVPKGVQMEHKAVSTSCSCQGPALGITEDTRVLQFAAYTFDACILEIITTLLHGACICIPSETQRRDHLVNTINTMKVTWALLTPAVARILDPQKIVSLKTLVLGGEKVNGSDCDTWSGRVRLINAYGPTECCVSCVASPDMKGLDPEPIGKPIASIGWVTNPNDHNRLAPLGAVGELLVEGPNLARGYLDDAKKTETAFVHDPLWLLRGCEGYSGRRGRLYKTGDLVYHTSDGDLVYVGRKDGQVKVRGQRIELAEIEICLYQHISDIKEIAVELISPTGGKPMIAAFLKANPELLNDKLSDGDSGVYVVYPARVDNELSQRLPRNMVPEVYFALTEFPISTSGKINRRRLREIGGSFSTDQLARLRTQKNESSDRKPETKHEMALQKLWAQVLNIEATSIGLNDSFFQLGGDSISAMKLVSEARNVDLVFSVQDVFQVQRLGRLANRLVDPPTSSHSAITKIDHQRPVLQSFAQGRLWFLEQLHPGLDWYLMHLAVRIKGPVQLPALQAALQAIEHRHETLRTTFSTNNGESLQEVHPFCGGRELNVIDVGSNDDKILLEALERDQKTPFNLRYEPGWRISIYRINDVSHVLSIVMHHIVSDGWSVDVLKKELSALYASAIRNEDPIFCLPPLPIQYRDFSVWQRLPEQAQEHRRQLDYWINQLDGSRPAEFLYDKPRPTTLSGKAGTQRLNISHKLYNRLQIFARQRGMTPFVVLLAVFRATHYRLTNQDDATIAVPNANRSRPELGDLIGFFVNIQCMRMKIQDETFEELLQHAYKTVVDSLANQDVPFESIVSALQGDRDSSRNPLAQVAFAVHSQQDIGKLDFEGVGTEAIEGLATSRFDLEFHFFQEKNGFQGYIYFSEELFVPETIYSLASVFTSILDNCLDKPETQIAVVPLMTVEAHTQLDQMGLLRMHQTAYPRNSSIVDVFRQQAAMQPSRVAVKDTSTDLTYAQLDSQSEKLAKFLATKSFAPETAVGVLAHRCCQAIVAFIGILKAGLAYLPFDHKAPEKRMESIFSTIEGNKLVLIGPNISLPGTGPKDVEFAYIPDILDADEDFEFTRSELDPTLRPTASSLAYILFTSGSTGQPKGVMVEHRGIVRLAQHDQMEHFKSSGAMAHMANLAFDGSSWEIYTCLLNGGTLVCIDATTVLDQDALLRAFTESQIRIAFITPALLNYILAESPDTIGNLDTLLVAGDRADVDDVFRARDLVRNKVVANAYGPTENSVMSTLYILSEDENCVNGVPIGRPISNSAAYVMDPEQNLVPLGVFGELVVTGDGVARGYTDPRRNVDRFVTVTIGHQTMRAYRTGDYVRQRPRDGEMEFFGRIDGQVKIRGNRVELGEIETVLRGHGLVRDAVVVAEQRKDKNQRLFGYITLKEDFEMLSAQNSDDDQIQHVNAWEHRFNTETYAQIVGIQSETVGQDFIGWTSMYDGTDIDKTEMKEWLEETIGSIHDKVGGQLGNVLEIGSGSGMILFNLGDSLKHYTGFEPSRKAVEFVTGTARSIPSLANKVEMYKATAADISKVDQPLQADLVVLNSVVQYFPSQGYLFNVVRDLLKVDGVKTLFFGDIRSYALRREFYAARALFMAGERASQKDLRRLVEDMEQIEQELLVDPGFFTSLTHRLPDLVQHVEIQPKRMRATNELSSYRYTAVVYSRSREPPCGGLRTIPDNEWIDFQEQGLNNDSLQQRIKDVSSTHPLAVSNISHTKTLFGNCLLGALGDGKARKPVHTDWTAHINRQAKGIPSLSAVDLDEMAKAAGCQVRISWNRQYSQHGGLDAIFYPRQINGGSDKAGVMFSFPTDHAERRRQTLSNKPMRQQLVKEVQQQLDELVKVQLPSYMVPQSIQVLNQLPINQNGKVDRKALIQRTRTQTEVSQGGLQRELSTAELKVQRILSRVLGIEASRMGLEDSFFQLGGDSIAAMKIVAAAREEEIHLTIANIFQHPKLVNLATVAQFSQHEGEQKSIQPFSLLSTTQRDYLLHAIPENTSNVNGNDIIDILPTTWMQNLFISRGVNIQPLAFNYFFLNLGTRVDASRLRSSIPTLVQQFSILRTKFVYVDGVLWQTVLRKPHVPFTEFHLDMSLEEAADTVCLEDSRTTDPLELATAFMLIRGTSNEHLLAIRITHAQYDGVCFPSFVKALFAIYSGKSVEPAHNHSTYLAYTRERKSVSALHWRDVLHGSRMTKATPLLSPSIRHGMIPVEVQTESIIGMPHVPTGLTLASLVSAAWAKVLSQITGEEDVVYGYMVAGRNANIPAITKIVGPCLNIIPVRARLHAKTTSTELIRSIQEQYIALGEADSMGFDEIVRTSTDWPADTEYDSVFQHQNLNEHPEFDFEGTSSRLHWFQNPDSVPCILTVVSYPLEDGLRIVVRGNEHIITPESAERINKLLCETIGALSSSLQ.

Residues 37-436 form an adenylation 1 region; the sequence is EEQAIARPNA…GRKDSQTKVR (400 aa). The region spanning 569–645 is the Carrier 1 domain; that stretch reads QPETEKEQIL…KLTSAAIPSV (77 aa). Ser-606 carries the O-(pantetheine 4'-phosphoryl)serine modification. Residues 659–1098 form a condensation 1 region; the sequence is GHVAQSFAQG…LLCDVELSKL (440 aa). Residues 1122–1522 are adenylation 2; sequence RQQTSLCPSR…GRMDGQVKIR (401 aa). The methyltransferase (M) domain 1 stretch occupies residues 1630–1742; sequence MNEWLDDTID…YLFKTTQQLL (113 aa). The region spanning 2068–2141 is the Carrier 2 domain; sequence TRAESKIQQL…QLAAVAQEHV (74 aa). Ser-2102 is subject to O-(pantetheine 4'-phosphoryl)serine. The interval 2179–2593 is condensation 2; sequence EDIYPCSPLQ…MLTQDDEQQL (415 aa). Residues 2614 to 3010 are adenylation 3; that stretch reads DQAKSRPEAD…GRKDGQVKVR (397 aa). The Carrier 3 domain occupies 3139–3215; sequence KPETKHEMAL…RLANRLVDPP (77 aa). Ser-3176 is modified (O-(pantetheine 4'-phosphoryl)serine). The condensation 3 stretch occupies residues 3232–3668; that stretch reads LQSFAQGRLW…VVPLMTVEAH (437 aa). The segment at 3694–4098 is adenylation 4; sequence FRQQAAMQPS…GRIDGQVKIR (405 aa). The tract at residues 4203–4329 is methyltransferase (M) domain 2; sequence EMKEWLEETI…KVDGVKTLFF (127 aa). In terms of domain architecture, Carrier 4 spans 4643 to 4725; that stretch reads RELSTAELKV…QFSQHEGEQK (83 aa). Ser-4680 is modified (O-(pantetheine 4'-phosphoryl)serine). A condensation 4 region spans residues 4785–5093; the sequence is FFLNLGTRVD…HQNLNEHPEF (309 aa).

Belongs to the NRP synthetase family.

It participates in phytotoxin biosynthesis. In terms of biological role, nonribosomal peptide synthetase; part of the gene cluster that mediates the biosynthesis of the phytotoxin tentoxin, an inhibitor the F1-ATPase activity of chloroplasts, resulting in chlorosis in sensitive plants. Tentoxin is a cyclic tetrapeptide that consists of four amino acid residues: glycine (Gly), alanine (Ala), leucine (Leu), and dehydrophenylalanine (DPhe). In addition, both the Ala and DPhe residues are N-methylated. The nonribosomal peptide synthetase TES assembles tentoxin from the four substrate amino acids. The adenylation domains of each of the 4 modules are responsible for the activation of Gly, Ala, Leu and DPhe, respectively. In addition, the N-methyltransferase domains in the second and fourth modules of TES could be responsible for N-methylation of Ala and DPhe residues. Finally, the condensation domain located in the termination module probably catalyzes the formation of the intramolecular macrocyclization and then the release of tentoxin. The cytochrome P450 monooxygenase TES1 is predicted to be involved in the formation of DPhe. This Alternaria alternata (Alternaria rot fungus) protein is Nonribosomal peptide synthetase TES.